The chain runs to 332 residues: L-lactate dehydrogenase (332 aa).

Residues Gly-29 to Lys-57 and Arg-99 each bind NAD(+). 3 residues coordinate substrate: Arg-106, Asn-138, and Arg-169. Asn-138 is an NAD(+) binding site. The Proton acceptor role is filled by His-193. Thr-248 is a substrate binding site.

It belongs to the LDH/MDH superfamily. LDH family. In terms of assembly, homotetramer.

It localises to the cytoplasm. It carries out the reaction (S)-lactate + NAD(+) = pyruvate + NADH + H(+). It participates in fermentation; pyruvate fermentation to lactate; (S)-lactate from pyruvate: step 1/1. In Drosophila melanogaster (Fruit fly), this protein is L-lactate dehydrogenase.